We begin with the raw amino-acid sequence, 198 residues long: Ribonuclease HII (198 aa).

Residues 10–198 form the RNase H type-2 domain; it reads HLVAGVDEVG…PVKRALGLVS (189 aa). A divalent metal cation is bound by residues Asp16, Glu17, and Asp108.

Belongs to the RNase HII family. The cofactor is Mn(2+). Requires Mg(2+) as cofactor.

Its subcellular location is the cytoplasm. The catalysed reaction is Endonucleolytic cleavage to 5'-phosphomonoester.. Functionally, endonuclease that specifically degrades the RNA of RNA-DNA hybrids. In Salmonella paratyphi A (strain AKU_12601), this protein is Ribonuclease HII.